Consider the following 920-residue polypeptide: Probable helicase HelY (920 aa).

Residues 26–184 form the Helicase ATP-binding domain; sequence CAALERGHGV…WVQTVRGDTT (159 aa). Residue 39–46 participates in ATP binding; that stretch reads APTGAGKT. The short motif at 132 to 135 is the DEVH box element; sequence DEVH. The 205-residue stretch at 265-469 folds into the Helicase C-terminal domain; that stretch reads EVIAILDAEG…SYNMTINLVH (205 aa).

The protein belongs to the helicase family. SKI2 subfamily.

The protein is Probable helicase HelY (helY) of Mycobacterium leprae (strain TN).